The sequence spans 50 residues: Large ribosomal subunit protein bL33 (50 aa).

This sequence belongs to the bacterial ribosomal protein bL33 family.

The protein is Large ribosomal subunit protein bL33 of Fusobacterium nucleatum subsp. nucleatum (strain ATCC 25586 / DSM 15643 / BCRC 10681 / CIP 101130 / JCM 8532 / KCTC 2640 / LMG 13131 / VPI 4355).